Here is a 97-residue protein sequence, read N- to C-terminus: Integration host factor subunit alpha (97 aa).

It belongs to the bacterial histone-like protein family. Heterodimer of an alpha and a beta chain.

In terms of biological role, this protein is one of the two subunits of integration host factor, a specific DNA-binding protein that functions in genetic recombination as well as in transcriptional and translational control. In Hydrogenovibrio crunogenus (strain DSM 25203 / XCL-2) (Thiomicrospira crunogena), this protein is Integration host factor subunit alpha.